A 190-amino-acid polypeptide reads, in one-letter code: uncharacterized protein (190 aa).

The helical transmembrane segment at 12 to 34 (LLGLSIFLTTFLFVANFLPGIFA) threads the bilayer.

The protein localises to the membrane. This is an uncharacterized protein from Archaeoglobus fulgidus (strain ATCC 49558 / DSM 4304 / JCM 9628 / NBRC 100126 / VC-16).